A 361-amino-acid polypeptide reads, in one-letter code: Replication-associated protein (361 aa).

The disordered stretch occupies residues methionine 1–glutamate 31. The region spanning serine 35 to phenylalanine 138 is the CRESS-DNA virus Rep endonuclease domain. The RCR-1 signature appears at phenylalanine 42–tyrosine 45. Positions 76, 84, and 86 each coordinate a divalent metal cation. The short motif at histidine 84–histidine 86 is the RCR-2 element. Tyrosine 124 functions as the For DNA cleavage activity in the catalytic mechanism. The RCR-3 signature appears at tyrosine 124 to lysine 127. The segment at serine 192–tyrosine 204 is oligomerization. Glycine 243–threonine 250 contributes to the ATP binding site. The segment at valine 266–proline 285 is transactivation. Positions lysine 307–glycine 317 match the Nuclear localization signal motif.

This sequence belongs to the geminiviridae Rep protein family. Homooligomer. Rep binds to repeated DNA motifs (iterons). Forms the O-complex, which is a Rep-DNA complex involved in the initiation of RCR. Part of the C- and V-complexes which are RepA-Rep-DNA complexes involved in the c-sense and v-sense transcription. Mg(2+) serves as cofactor. The cofactor is Mn(2+).

Its subcellular location is the host nucleus. Functionally, essential for the replication of viral ssDNA. The closed circular ssDNA genome is first converted to a superhelical dsDNA. Rep binds a specific region at the genome origin of replication. It introduces an endonucleolytic nick within the conserved sequence 5'-TAATATTAC-3' in the intergenic region of the genome present in all geminiviruses, thereby initiating the rolling circle replication (RCR). Following cleavage, binds covalently to the 5'-phosphate of DNA as a tyrosyl ester. The cleavage gives rise to a free 3'-OH that serves as a primer for the cellular DNA polymerase. The polymerase synthesizes the (+) strand DNA by rolling circle mechanism. After one round of replication, a Rep-catalyzed nucleotidyl transfer reaction releases a circular single-stranded virus genome, thereby terminating the replication. Displays origin-specific DNA cleavage, nucleotidyl transferase, ATPase and helicase activities. Acts as an inhibitor of C-sense gene transcription. The polypeptide is Replication-associated protein (Avena sativa (Oat)).